A 116-amino-acid polypeptide reads, in one-letter code: Large ribosomal subunit protein uL18 (116 aa).

This sequence belongs to the universal ribosomal protein uL18 family. Part of the 50S ribosomal subunit; part of the 5S rRNA/L5/L18/L25 subcomplex. Contacts the 5S and 23S rRNAs.

Its function is as follows. This is one of the proteins that bind and probably mediate the attachment of the 5S RNA into the large ribosomal subunit, where it forms part of the central protuberance. The protein is Large ribosomal subunit protein uL18 of Shewanella baltica (strain OS223).